The chain runs to 428 residues: Histidine--tRNA ligase (428 aa).

Belongs to the class-II aminoacyl-tRNA synthetase family. Homodimer.

It is found in the cytoplasm. The catalysed reaction is tRNA(His) + L-histidine + ATP = L-histidyl-tRNA(His) + AMP + diphosphate + H(+). The polypeptide is Histidine--tRNA ligase (Halalkalibacterium halodurans (strain ATCC BAA-125 / DSM 18197 / FERM 7344 / JCM 9153 / C-125) (Bacillus halodurans)).